The following is a 393-amino-acid chain: Riboflavin biosynthesis protein RibBA (393 aa).

The DHBP synthase stretch occupies residues 1 to 200 (MQFDNIDSAL…IDDLIEYRKK (200 aa)). D-ribulose 5-phosphate-binding positions include 27 to 28 (RE), Asp32, 139 to 143 (RNGHT), and Glu163. Glu28 contributes to the Mg(2+) binding site. Mg(2+) is bound at residue His142. The interval 201-393 (LEPEIEFKAK…TKKIKMGHLI (193 aa)) is GTP cyclohydrolase II. 249–253 (RLHSA) is a binding site for GTP. Residues Cys254, Cys265, and Cys267 each coordinate Zn(2+). Residues Gln270, 291–293 (EGR), and Thr313 contribute to the GTP site. Asp325 serves as the catalytic Proton acceptor; for GTP cyclohydrolase activity. Residue Arg327 is the Nucleophile; for GTP cyclohydrolase activity of the active site. GTP is bound by residues Ser348 and Lys353.

This sequence in the N-terminal section; belongs to the DHBP synthase family. It in the C-terminal section; belongs to the GTP cyclohydrolase II family. Mg(2+) serves as cofactor. The cofactor is Mn(2+). Zn(2+) is required as a cofactor.

The catalysed reaction is D-ribulose 5-phosphate = (2S)-2-hydroxy-3-oxobutyl phosphate + formate + H(+). It carries out the reaction GTP + 4 H2O = 2,5-diamino-6-hydroxy-4-(5-phosphoribosylamino)-pyrimidine + formate + 2 phosphate + 3 H(+). Its pathway is cofactor biosynthesis; riboflavin biosynthesis; 2-hydroxy-3-oxobutyl phosphate from D-ribulose 5-phosphate: step 1/1. It functions in the pathway cofactor biosynthesis; riboflavin biosynthesis; 5-amino-6-(D-ribitylamino)uracil from GTP: step 1/4. Catalyzes the conversion of D-ribulose 5-phosphate to formate and 3,4-dihydroxy-2-butanone 4-phosphate. Functionally, catalyzes the conversion of GTP to 2,5-diamino-6-ribosylamino-4(3H)-pyrimidinone 5'-phosphate (DARP), formate and pyrophosphate. The chain is Riboflavin biosynthesis protein RibBA from Staphylococcus aureus (strain MSSA476).